A 396-amino-acid chain; its full sequence is S-adenosylmethionine synthase (396 aa).

His16 contributes to the ATP binding site. Asp18 provides a ligand contact to Mg(2+). Glu44 provides a ligand contact to K(+). Residues Glu57 and Gln100 each contribute to the L-methionine site. Positions 100–110 (QSPDIAQGVDR) are flexible loop. ATP-binding positions include 167–169 (DAK), 233–234 (RF), Asp242, 248–249 (RK), Ala265, and Lys269. Asp242 is an L-methionine binding site. An L-methionine-binding site is contributed by Lys273.

This sequence belongs to the AdoMet synthase family. In terms of assembly, homotetramer; dimer of dimers. It depends on Mg(2+) as a cofactor. Requires K(+) as cofactor.

The protein resides in the cytoplasm. It catalyses the reaction L-methionine + ATP + H2O = S-adenosyl-L-methionine + phosphate + diphosphate. The protein operates within amino-acid biosynthesis; S-adenosyl-L-methionine biosynthesis; S-adenosyl-L-methionine from L-methionine: step 1/1. Its function is as follows. Catalyzes the formation of S-adenosylmethionine (AdoMet) from methionine and ATP. The overall synthetic reaction is composed of two sequential steps, AdoMet formation and the subsequent tripolyphosphate hydrolysis which occurs prior to release of AdoMet from the enzyme. This chain is S-adenosylmethionine synthase, found in Paraburkholderia phytofirmans (strain DSM 17436 / LMG 22146 / PsJN) (Burkholderia phytofirmans).